The chain runs to 131 residues: Transcription antitermination protein NusB (131 aa).

This sequence belongs to the NusB family.

In terms of biological role, involved in transcription antitermination. Required for transcription of ribosomal RNA (rRNA) genes. Binds specifically to the boxA antiterminator sequence of the ribosomal RNA (rrn) operons. This chain is Transcription antitermination protein NusB, found in Ligilactobacillus salivarius (strain UCC118) (Lactobacillus salivarius).